Here is a 41-residue protein sequence, read N- to C-terminus: uncharacterized protein (41 aa).

This is an uncharacterized protein from Dictyostelium discoideum (Social amoeba).